We begin with the raw amino-acid sequence, 89 residues long: Small ribosomal subunit protein uS15 (89 aa).

It belongs to the universal ribosomal protein uS15 family. Part of the 30S ribosomal subunit. Forms a bridge to the 50S subunit in the 70S ribosome, contacting the 23S rRNA.

One of the primary rRNA binding proteins, it binds directly to 16S rRNA where it helps nucleate assembly of the platform of the 30S subunit by binding and bridging several RNA helices of the 16S rRNA. In terms of biological role, forms an intersubunit bridge (bridge B4) with the 23S rRNA of the 50S subunit in the ribosome. The polypeptide is Small ribosomal subunit protein uS15 (Marinomonas sp. (strain MWYL1)).